The chain runs to 205 residues: Holliday junction branch migration complex subunit RuvA (205 aa).

The tract at residues 1-64 is domain I; that stretch reads MIGKLKGILE…EEAIRLFGFV (64 aa). Residues 65–143 are domain II; the sequence is AKAEQEWFCL…PFNDNALHFT (79 aa). Positions 144–149 are flexible linker; that stretch reads PQPHLE. The interval 150–205 is domain III; the sequence is VTHQPTNDALSALVKLGFERDQAARALALAMNALEGETVSSALLIRHSLKLLSPST.

The protein belongs to the RuvA family. Homotetramer. Forms an RuvA(8)-RuvB(12)-Holliday junction (HJ) complex. HJ DNA is sandwiched between 2 RuvA tetramers; dsDNA enters through RuvA and exits via RuvB. An RuvB hexamer assembles on each DNA strand where it exits the tetramer. Each RuvB hexamer is contacted by two RuvA subunits (via domain III) on 2 adjacent RuvB subunits; this complex drives branch migration. In the full resolvosome a probable DNA-RuvA(4)-RuvB(12)-RuvC(2) complex forms which resolves the HJ.

The protein resides in the cytoplasm. In terms of biological role, the RuvA-RuvB-RuvC complex processes Holliday junction (HJ) DNA during genetic recombination and DNA repair, while the RuvA-RuvB complex plays an important role in the rescue of blocked DNA replication forks via replication fork reversal (RFR). RuvA specifically binds to HJ cruciform DNA, conferring on it an open structure. The RuvB hexamer acts as an ATP-dependent pump, pulling dsDNA into and through the RuvAB complex. HJ branch migration allows RuvC to scan DNA until it finds its consensus sequence, where it cleaves and resolves the cruciform DNA. This is Holliday junction branch migration complex subunit RuvA from Bartonella quintana (strain Toulouse) (Rochalimaea quintana).